Consider the following 53-residue polypeptide: uncharacterized protein (53 aa).

A helical transmembrane segment spans residues 13 to 35 (FLLHSFTFPIAHCPSFSWASFFF).

Its subcellular location is the membrane. This is an uncharacterized protein from Saccharomyces cerevisiae (strain ATCC 204508 / S288c) (Baker's yeast).